A 183-amino-acid polypeptide reads, in one-letter code: UPF0316 protein BcerKBAB4_3093 (183 aa).

Transmembrane regions (helical) follow at residues 6–26 (LIFV…ILLV), 32–52 (SAAG…GIVF), and 58–78 (WMNI…GGYI).

It belongs to the UPF0316 family.

The protein resides in the cell membrane. The protein is UPF0316 protein BcerKBAB4_3093 of Bacillus mycoides (strain KBAB4) (Bacillus weihenstephanensis).